We begin with the raw amino-acid sequence, 151 residues long: Small ribosomal subunit protein uS15 (151 aa).

The residue at position 32 (Ser32) is a Phosphoserine. Residues Lys39 and Lys43 each participate in a glycyl lysine isopeptide (Lys-Gly) (interchain with G-Cter in ubiquitin) cross-link.

The protein belongs to the universal ribosomal protein uS15 family. In terms of assembly, component of the small ribosomal subunit (SSU). Mature yeast ribosomes consist of a small (40S) and a large (60S) subunit. The 40S small subunit contains 1 molecule of ribosomal RNA (18S rRNA) and 33 different proteins (encoded by 57 genes). The large 60S subunit contains 3 rRNA molecules (25S, 5.8S and 5S rRNA) and 46 different proteins (encoded by 81 genes).

The protein localises to the cytoplasm. Its function is as follows. Component of the ribosome, a large ribonucleoprotein complex responsible for the synthesis of proteins in the cell. The small ribosomal subunit (SSU) binds messenger RNAs (mRNAs) and translates the encoded message by selecting cognate aminoacyl-transfer RNA (tRNA) molecules. The large subunit (LSU) contains the ribosomal catalytic site termed the peptidyl transferase center (PTC), which catalyzes the formation of peptide bonds, thereby polymerizing the amino acids delivered by tRNAs into a polypeptide chain. The nascent polypeptides leave the ribosome through a tunnel in the LSU and interact with protein factors that function in enzymatic processing, targeting, and the membrane insertion of nascent chains at the exit of the ribosomal tunnel. The chain is Small ribosomal subunit protein uS15 from Saccharomyces cerevisiae (strain ATCC 204508 / S288c) (Baker's yeast).